Here is a 405-residue protein sequence, read N- to C-terminus: Protein lin-11 (405 aa).

Residues Lys-17 and Lys-18 each participate in a glycyl lysine isopeptide (Lys-Gly) (interchain with G-Cter in SUMO) cross-link. 2 LIM zinc-binding domains span residues 68–124 (CAAC…RRYS) and 127–187 (CAGC…TATK). A compositionally biased stretch (polar residues) spans 189–205 (STPTSIHRPVSNGSECN). Disordered stretches follow at residues 189–208 (STPT…NSDV) and 224–246 (GEGD…GPRT). A DNA-binding region (homeobox) is located at residues 241-300 (RRGPRTTIKAKQLETLKNAFAATPKPTRHIREQLAAETGLNMRVIQVWFQNRRSKERRMK).

In terms of tissue distribution, expressed in ADL, AVJL, AIZL, RICL, RIF and AVG neurons.

It is found in the nucleus. Functionally, probable transcription factor which is required for asymmetric division of vulval blast cells. Involved in olfactory plasticity probably by regulating the expression of transcription factor mbr-1 in RIF neurons. Plays a role in the chemorepulsive response toward ascaroside pheromones mediated by the ADL sensory neurons, probably by regulating E-box motif 5'-CANNTG-3' containing target genes in the ADL neurons. Plays a role in the differentiation of the ADL sensory neurons. This is Protein lin-11 (lin-11) from Caenorhabditis elegans.